The chain runs to 219 residues: Flagellin B4 (219 aa).

Residues M1–G5 constitute a propeptide that is removed on maturation.

This sequence belongs to the archaeal flagellin family.

It localises to the archaeal flagellum. Its function is as follows. Flagellin is the subunit protein which polymerizes to form the filaments of archaeal flagella. The sequence is that of Flagellin B4 (flaB4) from Pyrococcus abyssi (strain GE5 / Orsay).